The chain runs to 365 residues: Nudix hydrolase 24, chloroplastic (365 aa).

The transit peptide at 1–30 (MASAFCSLCPTPTSLFSSHALIPTLQWRSS) directs the protein to the chloroplast. A Nudix hydrolase domain is found at 196 to 337 (GYAIHVNGYV…KDSCSLVIID (142 aa)). A Nudix box motif is present at residues 235 to 256 (GGLPHGISVCENLVKECEEEAG). Residues glutamate 250 and glutamate 254 each contribute to the Mg(2+) site.

This sequence belongs to the Nudix hydrolase family. Mg(2+) is required as a cofactor. Requires Mn(2+) as cofactor. In terms of tissue distribution, expressed in leaves.

It is found in the plastid. It localises to the chloroplast. In terms of biological role, probably mediates the hydrolysis of some nucleoside diphosphate derivatives. This Arabidopsis thaliana (Mouse-ear cress) protein is Nudix hydrolase 24, chloroplastic (NUDT24).